The chain runs to 350 residues: Major allergen Mal f 1 (350 aa).

Residues 1 to 22 form the signal peptide; sequence MRYSTVLAALALLGTSAVSVLA.

The protein localises to the secreted. It is found in the cell wall. This chain is Major allergen Mal f 1, found in Malassezia furfur (Pityriasis versicolor infection agent).